The primary structure comprises 647 residues: Sodium/nucleoside cotransporter 1 (647 aa).

The Cytoplasmic segment spans residues 1 to 79 (MEDNTPRQRD…VRRFCREHTQ (79 aa)). The disordered stretch occupies residues 34 to 58 (EGRAPGSDSSPAEVGGGWSKAGPEH). Residues 80 to 103 (LFRWICTGLLCTAFAAFLLIACLL) form a helical membrane-spanning segment. Residues 104–108 (DFQRA) lie on the Extracellular side of the membrane. Residues 109-127 (LALFVLFCVVLFFLAHSLL) form a helical membrane-spanning segment. At 128–146 (KRLLGPKLLRCVKPLRHPC) the chain is on the cytoplasmic side. The helical transmembrane segment at 147-166 (LNLWFKRGLALAAFLGLVLW) threads the bilayer. The Extracellular segment spans residues 167–177 (LVLDTAQRPEQ). The chain crosses the membrane as a helical span at residues 178–194 (LVSFGGICVFILLLFAG). The Cytoplasmic segment spans residues 195–200 (SKHHRA). The chain crosses the membrane as a helical span at residues 201–221 (VSWRAVSWGLGLQFALGLFVI). Topologically, residues 222-260 (RTEPGFIAFQWLGDQIQIFLSYTEAGSSFVFGEALVKDV) are extracellular. The helical transmembrane segment at 261–282 (FAFQVLPIIVFFSCAMSVLYYV) threads the bilayer. Over 283–293 (GLMQWVILKIS) the chain is Cytoplasmic. A helical transmembrane segment spans residues 294–317 (WLMQATMGTTATETLSVAGNIFVS). Residues 318–336 (QTEAPLLIRPYLADMTLSE) are Extracellular-facing. The chain crosses the membrane as a helical span at residues 337-359 (IHVVMTGGYATIAGSLLGAYISF). The Cytoplasmic portion of the chain corresponds to 360–365 (GIDAAS). A helical transmembrane segment spans residues 366 to 385 (LIAASVMAAPCALALSKLVY). The Extracellular portion of the chain corresponds to 386 to 422 (PEVEESKFKREEGVKLTYGDAQNLLEAASSGAAMSVR). A helical transmembrane segment spans residues 423–445 (VVTNIAANLIAFLAVLAFINAAL). Over 446-456 (SWLGDMVDVQG) the chain is Cytoplasmic. Residues 457 to 478 (LSFQLICSYVLRPVAFLMGVAW) form a helical membrane-spanning segment. Residues 479–533 (EDCPVVAELLGMKLFLNEFVAYQELSGYKQRRLAGAEEWVGSRKQWISVRAEILT) are Extracellular-facing. The helical transmembrane segment at 534–557 (TYALCGFANFSSIGIMLGGLTSMV) threads the bilayer. The Cytoplasmic segment spans residues 558–568 (PQRKGDFSQIV). A helical transmembrane segment spans residues 569-591 (LRALCTGACVSLVNACVAGILYV). The Extracellular segment spans residues 592 to 647 (PRGAEVDCVSFLNTTLSSSSFEVYQCCRQFFQSTSLEFSPEALDNCCRFYNHTICV). N-linked (GlcNAc...) asparagine glycosylation is found at asparagine 604 and asparagine 642.

Belongs to the concentrative nucleoside transporter (CNT) (TC 2.A.41) family. Post-translationally, N-glycosylated. N-glycosylation is required for localization to the plasma membrane and the transporter activity.

Its subcellular location is the cell membrane. It is found in the apical cell membrane. The catalysed reaction is uridine(out) + Na(+)(out) = uridine(in) + Na(+)(in). It catalyses the reaction thymidine(out) + Na(+)(out) = thymidine(in) + Na(+)(in). It carries out the reaction cytidine(out) + Na(+)(out) = cytidine(in) + Na(+)(in). The enzyme catalyses adenosine(out) + Na(+)(out) = adenosine(in) + Na(+)(in). Its activity is regulated as follows. Due to its high apparent affinity but slow transport, adenosine could act as a negative regulator of pyrimidine transport under some conditions. Functionally, sodium and pyrimidine nucleoside symporter of the plasma membrane that imports uridine, thymidine and cytidine into cells by coupling their transport to the transmembrane sodium electrochemical gradient. Also transports adenosine, an atypical substrate transported with high apparent affinity, but low maximum velocity. Therefore, exhibits the transport characteristics of the nucleoside transport system cit or N2 subtype (N2/cit). Involved in renal nucleoside (re)absorption. The sequence is that of Sodium/nucleoside cotransporter 1 (SLC28A1) from Sus scrofa (Pig).